The following is an 821-amino-acid chain: MLHMNSASSADSMEIMESHFDPTQQNDSTIIESRYSPEEYLEQSFEIQRIISGENSEPQTVASQEISDSQEEDTTLTSSQFEDCGTEYNEVVEDDEFRSEDEDDFMDEEEEYALYEAELSSSPSIHEEVIDCNFVHAIRGFEATVEGQVDATKGDMMILLDDSNSYWWLVKMCKNLAIGYLPAEYIETPSERLARLNKYKNSETSNSQQSVTLPPLDIVEKTLEAPSPNFRIKRVTFTCSSNSSDDEMDSENDYEAMVNRTVAENGLEIEFSDSSDSSLSAEYRSESEDHVTDSPAYVDLTELEGGFNQFNSTSFQSTSPLGLEIVETEINGSSTTADSKNSHSPYSKFSSAYPDAENSNISKINISIAGNKELYGNATQSDPSLYSTWIANKHKTASSATVDSPLRRSLSVDAMQSNASFSSYSSTSNTDKSLRPSSYSAVSESSNFTHDVSRDNKEISLNAPKSIIVSQSDSFDTSNVTQDAPNDVEKEPISGQMPNNLSVQSLKQLEVYPIRHSVSIEMPSEKLLSPRLYSSSTPSSPTKGFQKDDEEDSENRKQADKVELSPSSLLRQMSLPVDSSSQSDAQCTTSSVYITAERKAFSQSSIDLSTLSNHHVNNEINRRSFAGGFTSLADELSEMRELLHESPAPLECNEEMVIPTPELDASSAIPSSSISHDEDLLPRKNTEESTSSSSFSSLITSPASLQYDENPFKQSVVAELNNNSSSVPFVDSAHASDIHAYDNDHVSTKNKEFNRRLREFILDPDSLSGLYWSVKSAGVRASRRVSRNIEGESVSSDLDDIFANVLKGLSDEMASLLNTNR.

Composition is skewed to polar residues over residues 1-11 (MLHMNSASSAD) and 21-31 (DPTQQNDSTII). Residues 1-36 (MLHMNSASSADSMEIMESHFDPTQQNDSTIIESRYS) are disordered. Tyr-35 carries the post-translational modification Phosphotyrosine. Ser-36 bears the Phosphoserine mark. At Tyr-40 the chain carries Phosphotyrosine. Residues 51–79 (ISGENSEPQTVASQEISDSQEEDTTLTSS) form a disordered region. Residues 53-67 (GENSEPQTVASQEIS) are compositionally biased toward polar residues. An SH3 domain is found at 130–191 (IDCNFVHAIR…PAEYIETPSE (62 aa)). 5 disordered regions span residues 267–292 (LEIE…DHVT), 333–352 (SSTT…FSSA), 473–500 (DSFD…MPNN), 529–570 (SPRL…SSLL), and 664–697 (DASS…SFSS). Over residues 268–282 (EIEFSDSSDSSLSAE) the composition is skewed to low complexity. Basic and acidic residues predominate over residues 283-292 (YRSESEDHVT). Polar residues-rich tracts occupy residues 333-350 (SSTT…SKFS) and 473-484 (DSFDTSNVTQDA). The tract at residues 527–821 (LLSPRLYSSS…EMASLLNTNR (295 aa)) is interaction with tea1. The segment covering 529–541 (SPRLYSSSTPSSP) has biased composition (low complexity). The segment covering 554 to 563 (ENRKQADKVE) has biased composition (basic and acidic residues). An interaction with win1 region spans residues 599–821 (KAFSQSSIDL…EMASLLNTNR (223 aa)). The segment covering 665–674 (ASSAIPSSSI) has biased composition (low complexity). Positions 675–687 (SHDEDLLPRKNTE) are enriched in basic and acidic residues.

As to quaternary structure, an essential component of the tea1 cell-end complex. Interacts with win1, tea1 and for3. Interacts with tip1 in the presence of tea1.

It localises to the cytoplasm. Its subcellular location is the cytoskeleton. Cell polarity factor essential for the bipolar localization and function of structures containing the cell-end marker tea1 during the normal cell cycle. Regulates cell polarity in complex with tea1 and together with the stress signaling MAPK cascade, contributes to cell polarity maintenance under stress conditions. Required for the localization of for3 at the cell tip specifically during initiation of bipolar growth. During the new end take off (NETO), formation of a protein complex that includes tea1, tea4 and for3 is necessary and sufficient for the establishment of cell polarity and localized actin assembly at new cell ends. This chain is Tip elongation aberrant protein Tea4, found in Schizosaccharomyces pombe (strain 972 / ATCC 24843) (Fission yeast).